The following is a 150-amino-acid chain: Flagellar assembly factor FliW (150 aa).

Belongs to the FliW family. As to quaternary structure, interacts with translational regulator CsrA and flagellin(s).

The protein resides in the cytoplasm. Acts as an anti-CsrA protein, binds CsrA and prevents it from repressing translation of its target genes, one of which is flagellin. Binds to flagellin and participates in the assembly of the flagellum. This is Flagellar assembly factor FliW from Leptospira borgpetersenii serovar Hardjo-bovis (strain L550).